The primary structure comprises 1229 residues: Membrane-anchored lipid-binding protein SIP3 (1229 aa).

Residues 1-1066 (MSVHGRDPKK…AEKFSRINRM (1066 aa)) lie on the Cytoplasmic side of the membrane. The region spanning 309–423 (SPEKSGWLYM…WLIAFEATKK (115 aa)) is the PH domain. Positions 771–976 (EYSITYNHEY…VLRYYLEKIG (206 aa)) constitute a VASt domain. Residues 1067–1087 (MVVGLLASIMINILLSEKASV) form a helical membrane-spanning segment. Residues 1088–1229 (PYWSIKRAEK…ELEKLRPPIT (142 aa)) lie on the Lumenal side of the membrane. Asn-1206 is a glycosylation site (N-linked (GlcNAc...) asparagine).

It belongs to the SIP3 family. In terms of assembly, interacts with SNF1.

It is found in the endoplasmic reticulum membrane. May be involved in sterol transfer between intracellular membranes. This chain is Membrane-anchored lipid-binding protein SIP3, found in Saccharomyces cerevisiae (strain ATCC 204508 / S288c) (Baker's yeast).